We begin with the raw amino-acid sequence, 301 residues long: PWI domain-containing protein C825.05c (301 aa).

The 112-residue stretch at 26 to 137 (STKFPASYDT…YGIPEKFILE (112 aa)) folds into the PWI domain. Phosphoserine is present on serine 86. Basic and acidic residues-rich tracts occupy residues 145–182 (LKDRTEASKEESKTVTDHSNRRESRRESTYYDSRERNG), 189–205 (TLDRKRFHDASDTERNR), and 215–229 (RFSEKPRGERYDIRS). The disordered stretch occupies residues 145 to 301 (LKDRTEASKE…ESDSGTQKHD (157 aa)). Serine 199 is modified (phosphoserine). Residues 244-253 (PTRRRERHYR) show a composition bias toward basic residues. Over residues 254 to 289 (TRDDEGFDEFGRSRDGRWRESRTSYREKHRYDRDAL) the composition is skewed to basic and acidic residues. The span at 290–301 (SSESDSGTQKHD) shows a compositional bias: polar residues. A Phosphoserine modification is found at serine 291.

Its subcellular location is the nucleus. This chain is PWI domain-containing protein C825.05c, found in Schizosaccharomyces pombe (strain 972 / ATCC 24843) (Fission yeast).